The following is a 199-amino-acid chain: Elongation factor Ts (199 aa).

The segment at 82–85 is involved in Mg(2+) ion dislocation from EF-Tu; the sequence is TDFV.

Belongs to the EF-Ts family.

Its subcellular location is the cytoplasm. Functionally, associates with the EF-Tu.GDP complex and induces the exchange of GDP to GTP. It remains bound to the aminoacyl-tRNA.EF-Tu.GTP complex up to the GTP hydrolysis stage on the ribosome. This chain is Elongation factor Ts, found in Leptospira interrogans serogroup Icterohaemorrhagiae serovar copenhageni (strain Fiocruz L1-130).